We begin with the raw amino-acid sequence, 832 residues long: Translation initiation factor IF-2 (832 aa).

A compositionally biased stretch (basic and acidic residues) spans 1-10 (MLMSDVEKFG). Disordered stretches follow at residues 1 to 87 (MLMS…SRSA), 120 to 148 (RDEE…PAAA), and 163 to 201 (IAPG…GGGG). Over residues 11-20 (GDCGSSGGSG) the composition is skewed to gly residues. Composition is skewed to polar residues over residues 29 to 42 (RAST…STGG) and 71 to 87 (SPYT…SRSA). The tr-type G domain maps to 331–500 (PRPPVVTVMG…LLLAEMLELR (170 aa)). Positions 340 to 347 (GHVDHGKT) are G1. 340–347 (GHVDHGKT) serves as a coordination point for GTP. The segment at 365–369 (GITQH) is G2. The tract at residues 386–389 (DTPG) is G3. GTP contacts are provided by residues 386 to 390 (DTPGH) and 440 to 443 (NKID). Residues 440 to 443 (NKID) are G4. The segment at 476–478 (SAK) is G5.

Belongs to the TRAFAC class translation factor GTPase superfamily. Classic translation factor GTPase family. IF-2 subfamily.

The protein localises to the cytoplasm. Functionally, one of the essential components for the initiation of protein synthesis. Protects formylmethionyl-tRNA from spontaneous hydrolysis and promotes its binding to the 30S ribosomal subunits. Also involved in the hydrolysis of GTP during the formation of the 70S ribosomal complex. The polypeptide is Translation initiation factor IF-2 (Anaplasma marginale (strain St. Maries)).